Consider the following 382-residue polypeptide: Protein RecA (382 aa).

Position 79–86 (79–86 (GPESSGKT)) interacts with ATP. The disordered stretch occupies residues 362–382 (ATKSAAKGSEVQADVKTKGAA).

This sequence belongs to the RecA family.

It localises to the cytoplasm. Functionally, can catalyze the hydrolysis of ATP in the presence of single-stranded DNA, the ATP-dependent uptake of single-stranded DNA by duplex DNA, and the ATP-dependent hybridization of homologous single-stranded DNAs. It interacts with LexA causing its activation and leading to its autocatalytic cleavage. This Synechococcus sp. (strain WH7803) protein is Protein RecA.